Reading from the N-terminus, the 79-residue chain is MSDVLERVRKIVIEHLDADPEKVTEKASFIDDLGADSLDNVELVMAFEEEFDIEIPDDAAEHIQTVGDAVKFIQERLGA.

One can recognise a Carrier domain in the interval 2–77 (SDVLERVRKI…DAVKFIQERL (76 aa)). S37 is subject to O-(pantetheine 4'-phosphoryl)serine.

The protein belongs to the acyl carrier protein (ACP) family. 4'-phosphopantetheine is transferred from CoA to a specific serine of apo-ACP by AcpS. This modification is essential for activity because fatty acids are bound in thioester linkage to the sulfhydryl of the prosthetic group.

It localises to the cytoplasm. It participates in lipid metabolism; fatty acid biosynthesis. Functionally, carrier of the growing fatty acid chain in fatty acid biosynthesis. The chain is Acyl carrier protein from Phenylobacterium zucineum (strain HLK1).